The following is a 61-amino-acid chain: Mu-diguetoxin-Dc1c (61 aa).

3 disulfides stabilise this stretch: Cys-12/Cys-25, Cys-19/Cys-39, and Cys-24/Cys-53.

Belongs to the neurotoxin 26 (DTX) family. Expressed by the venom gland.

The protein localises to the secreted. Acts by delaying the inactivation of presynaptic voltage-sensitive sodium channels (Nav). Acts against insects and causes a progressive spastic paralysis. The polypeptide is Mu-diguetoxin-Dc1c (Diguetia canities (Desert bush spider)).